The sequence spans 60 residues: Myrmicitoxin(1)-Pr4b (60 aa).

Positions 1-23 are cleaved as a signal peptide; sequence MKAIIFLFAVLTVVAIIIPIISG. The propeptide occupies 24–33; sequence EPNAGPHAAS. Gln-59 is subject to Glutamine amide.

Belongs to the formicidae venom clade 2 family. Expressed by the venom gland.

The protein resides in the secreted. Its function is as follows. Toxin that causes a rapid and irreversible paralysis when intrathoracically injected into insects (blowflies). Does not cause spontaneous nocifensive behaviors by intraplantar injection in mice. In Pogonomyrmex rugosus (Desert harvester ant), this protein is Myrmicitoxin(1)-Pr4b.